The sequence spans 425 residues: MESPDSSSGSAPPRVLRRQQQQPGSAPELPPGFRFHPTDEELVVHYLKKKAASVPLPVTIIAEVDLYKFDPWELPEKANFGEQEWYFFSPRDRKYPNGARPNRAATSGYWKATGTDKPIMASGSTREKVGVKKALVFYRGKPPKGVKTNWIMHEYRLTDTSSSAAAVATTRQPPPPITGGSRGAVSLRLDDWVLCRIYKKTNKAGAGQRSMECEDSVEDAVAAYAPSSQQHATAAAGMAGSDGAGGVAAAHGGDYSSLLHHDSHEDTFLVNGLLTAEDAAGLSTGASSLSQLAAAARAAATPCDATKQLLAPSPTPFNWFEAFLPRAKEFPSGLSRSSRDIGDMSLSSTVDRSLSEAGAVAIDTGDAANGANTMPAFINPLGVQGATYQQHQAIMGASLPSESAAAAAACNFQHPFQLSRVNWDS.

Residues 1 to 10 (MESPDSSSGS) are compositionally biased toward polar residues. Residues 1-34 (MESPDSSSGSAPPRVLRRQQQQPGSAPELPPGFR) are disordered. Positions 12 to 23 (PPRVLRRQQQQP) are enriched in low complexity. The region spanning 29 to 200 (LPPGFRFHPT…DWVLCRIYKK (172 aa)) is the NAC domain. Residues 129–206 (VGVKKALVFY…IYKKTNKAGA (78 aa)) mediate DNA binding.

It is found in the nucleus. Transcription factor of the NAC family associated with male fertility. This chain is NAC transcription factor ONAC010 (ONAC010), found in Oryza sativa subsp. indica (Rice).